The primary structure comprises 690 residues: Methionine--tRNA ligase (690 aa).

The 'HIGH' region motif lies at 13-23 (PYANGQIHIGH). Positions 144, 147, 157, and 160 each coordinate Zn(2+). The short motif at 335 to 339 (KMSKS) is the 'KMSKS' region element. ATP is bound at residue Lys338. Positions 584 to 690 (DFAKIDLRVA…SGAVPGMRIR (107 aa)) constitute a tRNA-binding domain.

The protein belongs to the class-I aminoacyl-tRNA synthetase family. MetG type 1 subfamily. In terms of assembly, homodimer. The cofactor is Zn(2+).

The protein localises to the cytoplasm. The catalysed reaction is tRNA(Met) + L-methionine + ATP = L-methionyl-tRNA(Met) + AMP + diphosphate. Functionally, is required not only for elongation of protein synthesis but also for the initiation of all mRNA translation through initiator tRNA(fMet) aminoacylation. The protein is Methionine--tRNA ligase of Cupriavidus metallidurans (strain ATCC 43123 / DSM 2839 / NBRC 102507 / CH34) (Ralstonia metallidurans).